The chain runs to 100 residues: Large ribosomal subunit protein bL28 (100 aa).

This sequence belongs to the bacterial ribosomal protein bL28 family.

The sequence is that of Large ribosomal subunit protein bL28 from Ehrlichia ruminantium (strain Welgevonden).